The primary structure comprises 1001 residues: Kinesin-like protein KIN-14P (1001 aa).

In terms of domain architecture, Calponin-homology (CH) spans 53-172; the sequence is AIRRYEAANW…CVLSLRSFSE (120 aa). Residues 284–300 show a composition bias toward basic and acidic residues; the sequence is NESVKHALDPNDDKLLS. The disordered stretch occupies residues 284-322; the sequence is NESVKHALDPNDDKLLSRADTPPEMESTCTCSTGNMDEE. The Kinesin motor domain occupies 426 to 748; sequence NIRVYCRVRP…LKFAERVATV (323 aa). 509–516 lines the ATP pocket; it reads GQTGSGKT. Residues 756-784 adopt a coiled-coil conformation; sequence NKEGGEVKELKEQIACLKAALAKKDGETE. Disordered stretches follow at residues 804–830 and 890–1001; these read PPAF…QKKR and EPQW…SAKK. Positions 972–984 are enriched in polar residues; the sequence is PSASTKNGKQLSL.

This sequence belongs to the TRAFAC class myosin-kinesin ATPase superfamily. Kinesin family. KIN-14 subfamily.

The protein is Kinesin-like protein KIN-14P of Oryza sativa subsp. japonica (Rice).